Reading from the N-terminus, the 321-residue chain is Glycerol-3-phosphate phosphatase (321 aa).

Aspartate 34 serves as the catalytic Nucleophile. 3 residues coordinate Mg(2+): aspartate 34, aspartate 36, and aspartate 260. Aspartate 36 functions as the Proton donor in the catalytic mechanism.

The protein belongs to the HAD-like hydrolase superfamily. CbbY/CbbZ/Gph/YieH family. As to quaternary structure, homodimer. The cofactor is Mg(2+). In terms of tissue distribution, ubiquitously expressed with higher expression in testis, heart, skeletal muscle and islet tissue (at protein level).

The catalysed reaction is O-phospho-L-tyrosyl-[protein] + H2O = L-tyrosyl-[protein] + phosphate. It carries out the reaction sn-glycerol 1-phosphate + H2O = glycerol + phosphate. The enzyme catalyses sn-glycerol 3-phosphate + H2O = glycerol + phosphate. Inhibited by orthovanadate, beryllium trifluoride, Ca(2+) and EDTA. Functionally, glycerol-3-phosphate phosphatase hydrolyzing glycerol-3-phosphate into glycerol. Thereby, regulates the cellular levels of glycerol-3-phosphate a metabolic intermediate of glucose, lipid and energy metabolism. Was also shown to have a 2-phosphoglycolate phosphatase activity and a tyrosine-protein phosphatase activity. However, their physiological relevance is unclear. In vitro, also has a phosphatase activity toward ADP, ATP, GDP and GTP. In Mus musculus (Mouse), this protein is Glycerol-3-phosphate phosphatase.